Reading from the N-terminus, the 356-residue chain is Glutamine synthetase PR-2 (356 aa).

The GS beta-grasp domain maps to 19-99 (IIAEYIWVGG…VICDVYTPAG (81 aa)). The interval 37 to 66 (ARTLPGPVDDPAKLPKWNYDGSSTDQAPGD) is disordered. A GS catalytic domain is found at 106-356 (KRYDAAKIFS…IAETTILWKP (251 aa)).

It belongs to the glutamine synthetase family. As to quaternary structure, homooctamer. As to expression, roots.

It is found in the cytoplasm. It carries out the reaction L-glutamate + NH4(+) + ATP = L-glutamine + ADP + phosphate + H(+). The protein is Glutamine synthetase PR-2 of Phaseolus vulgaris (Kidney bean).